We begin with the raw amino-acid sequence, 278 residues long: Tryptophan synthase alpha chain (278 aa).

Active-site proton acceptor residues include glutamate 50 and aspartate 61.

It belongs to the TrpA family. In terms of assembly, tetramer of two alpha and two beta chains.

It catalyses the reaction (1S,2R)-1-C-(indol-3-yl)glycerol 3-phosphate + L-serine = D-glyceraldehyde 3-phosphate + L-tryptophan + H2O. It functions in the pathway amino-acid biosynthesis; L-tryptophan biosynthesis; L-tryptophan from chorismate: step 5/5. Its function is as follows. The alpha subunit is responsible for the aldol cleavage of indoleglycerol phosphate to indole and glyceraldehyde 3-phosphate. This is Tryptophan synthase alpha chain from Rhodopseudomonas palustris (strain BisA53).